The sequence spans 383 residues: uncharacterized protein (383 aa).

Positions 1–55 are disordered; it reads MSSKLTVNAHYSPLKDEDPLDHIDSQTALDSMETDSTGKSSLYFSKSDDPLSKDI. The span at 13-24 shows a compositional bias: basic and acidic residues; the sequence is PLKDEDPLDHID. Over residues 25–44 the composition is skewed to polar residues; that stretch reads SQTALDSMETDSTGKSSLYF. Over residues 46 to 55 the composition is skewed to basic and acidic residues; it reads KSDDPLSKDI. Helical transmembrane passes span 87-107, 112-132, 157-177, 179-199, 205-225, 228-248, 262-282, 299-319, 329-349, and 352-372; these read LTIF…TILN, NIIN…SLMV, FIFV…FVPV, FYQI…FVLL, LFPF…VRFE, VAPI…IESV, LIYI…VASL, FFIV…ATFT, YMIS…AFLG, and LYGN…LYTL.

The protein belongs to the TPT transporter family.

The protein localises to the membrane. This is an uncharacterized protein from Schizosaccharomyces pombe (strain 972 / ATCC 24843) (Fission yeast).